The chain runs to 83 residues: Exodeoxyribonuclease 7 small subunit (83 aa).

Belongs to the XseB family. As to quaternary structure, heterooligomer composed of large and small subunits.

It is found in the cytoplasm. The catalysed reaction is Exonucleolytic cleavage in either 5'- to 3'- or 3'- to 5'-direction to yield nucleoside 5'-phosphates.. Functionally, bidirectionally degrades single-stranded DNA into large acid-insoluble oligonucleotides, which are then degraded further into small acid-soluble oligonucleotides. This is Exodeoxyribonuclease 7 small subunit from Bradyrhizobium sp. (strain ORS 278).